A 169-amino-acid chain; its full sequence is Ribosome maturation factor RimP (169 aa).

Belongs to the RimP family.

It is found in the cytoplasm. Its function is as follows. Required for maturation of 30S ribosomal subunits. This Pseudomonas putida (strain W619) protein is Ribosome maturation factor RimP.